Here is a 379-residue protein sequence, read N- to C-terminus: Alcohol dehydrogenase 2 (379 aa).

Position 48 (Cys-48) interacts with Zn(2+). An NAD(+)-binding site is contributed by 49 to 53; it reads HTDML. Zn(2+)-binding residues include His-69, Cys-100, Cys-103, Cys-106, Cys-114, and Cys-178. NAD(+)-binding positions include 203–208, Asp-227, Lys-232, 275–277, 298–300, and 321–323; these read GLGAVG, TGI, IGA, and TTF.

Belongs to the zinc-containing alcohol dehydrogenase family. Class-IV subfamily. Homodimer. The cofactor is Zn(2+). In terms of tissue distribution, expressed in flowers and disk florets.

The enzyme catalyses (R,R)-chrysanthemol + NAD(+) = (1R,3R)-chrysanthemal + NADH + H(+). The catalysed reaction is nerol + NAD(+) = neral + NADH + H(+). It carries out the reaction (S)-(-)-citronellol + NAD(+) = (S)-(-)-citronellal + NADH + H(+). It catalyses the reaction perillyl alcohol + NAD(+) = perillyl aldehyde + NADH + H(+). The enzyme catalyses (6E)-8-hydroxygeraniol + NAD(+) = (6E)-8-hydroxygeranial + NADH + H(+). The catalysed reaction is (2E)-geraniol + NAD(+) = (2E)-geranial + NADH + H(+). It participates in isoprenoid biosynthesis. In terms of biological role, component of the monoterpenoid pyrethrins biosynthesis; pyrethrins are widely used plant-derived pesticide. Mediates the conversion of trans-chrysanthemol into trans-chrysanthemal. In Tanacetum cinerariifolium (Dalmatian daisy), this protein is Alcohol dehydrogenase 2.